The following is a 624-amino-acid chain: Chaperone protein HtpG (624 aa).

The a; substrate-binding stretch occupies residues 1–336 (MNMKGQETRG…SNDLPLNVSR (336 aa)). Residues 337–552 (EILQDSRITQ…ADEMSTQMAK (216 aa)) form a b region. Positions 553-624 (LFAAAGQQAP…IRRMNQLLTA (72 aa)) are c.

This sequence belongs to the heat shock protein 90 family. Homodimer.

The protein localises to the cytoplasm. In terms of biological role, molecular chaperone. Has ATPase activity. This Yersinia pestis bv. Antiqua (strain Antiqua) protein is Chaperone protein HtpG.